Consider the following 407-residue polypeptide: MSYPDDYSTDIEKNKMDLKEFKEKTQIAELESKVLRLELKNKDINRENVQIKKENEILKRELDKLRIPPLILGTILDKVNERKAVVKSSTGPNFLVNLSQFVDPEDIVPGARVCLNQQTLAIVEVLPKEKDYRAMAMEIEEKPDISFEDIGGLNNQIRDIKEVVELPLKNPELFEKVGIVPPKGVLLYGPPGTGKTLLAKAVAYETNASFVRVVGSELVKKFIGEGAKLVRDVFKLAKEKSPCIIFIDEIDAVASKRTESLTGGDREVQRTLMQLLAEMDGFDSRGDVKIIAATNRPDILDPAILRPGRFDRIIEISMPDEDGRLEILKIHTEKMNLKGVDLREVAKIAENMVGADLKAVCTEAGMFAIREEREFIKMDDFREAISKITGKKEKCSYDMPQLTVMYG.

A coiled-coil region spans residues 22 to 67 (KEKTQIAELESKVLRLELKNKDINRENVQIKKENEILKRELDKLRI). Residues 192-197 (GTGKTL) and H331 each bind ATP. Residues 405 to 407 (MYG) are docks into pockets in the proteasome alpha-ring to cause gate opening.

The protein belongs to the AAA ATPase family. Homohexamer. The hexameric complex has a two-ring architecture resembling a top hat that caps the 20S proteasome core at one or both ends. Upon ATP-binding, the C-terminus of PAN interacts with the alpha-rings of the proteasome core by binding to the intersubunit pockets.

It is found in the cytoplasm. In terms of biological role, ATPase which is responsible for recognizing, binding, unfolding and translocation of substrate proteins into the archaeal 20S proteasome core particle. Is essential for opening the gate of the 20S proteasome via an interaction with its C-terminus, thereby allowing substrate entry and access to the site of proteolysis. Thus, the C-termini of the proteasomal ATPase function like a 'key in a lock' to induce gate opening and therefore regulate proteolysis. Unfolding activity requires energy from ATP hydrolysis, whereas ATP binding alone promotes ATPase-20S proteasome association which triggers gate opening, and supports translocation of unfolded substrates. The sequence is that of Proteasome-activating nucleotidase from Methanococcus maripaludis (strain DSM 14266 / JCM 13030 / NBRC 101832 / S2 / LL).